Here is a 305-residue protein sequence, read N- to C-terminus: MPLTVLFWLISKARRWAFLTGLKSSVKVSAPVIIVGNISVGGNGKTPLVVHLAQFLQANGYRPGVLSRGYGGNSRDYPCAVTRNSQPSEVGDEPVLMRQRIHCPMVVDPHRGRGAQCLVEEHDCDVIICDDGLQHYALQRDIEIVVMDAKRRTGNHFLLPSGPLRESTARLGQVDFVVVNGQNTQSGEWLMSLAPSELVNLNNPTLHLALSELDAPVIAAAGIGHPERFYKLLERHKVKLKSCLSFVDHHAFQASDLPKERVLMTEKDAVKCRAFAHDDWWYLPVDANLDSEFEQQLLMKLRNVK.

39–46 (SVGGNGKT) provides a ligand contact to ATP.

This sequence belongs to the LpxK family.

The catalysed reaction is a lipid A disaccharide + ATP = a lipid IVA + ADP + H(+). The protein operates within glycolipid biosynthesis; lipid IV(A) biosynthesis; lipid IV(A) from (3R)-3-hydroxytetradecanoyl-[acyl-carrier-protein] and UDP-N-acetyl-alpha-D-glucosamine: step 6/6. Its function is as follows. Transfers the gamma-phosphate of ATP to the 4'-position of a tetraacyldisaccharide 1-phosphate intermediate (termed DS-1-P) to form tetraacyldisaccharide 1,4'-bis-phosphate (lipid IVA). This Pseudoalteromonas atlantica (strain T6c / ATCC BAA-1087) protein is Tetraacyldisaccharide 4'-kinase.